A 374-amino-acid polypeptide reads, in one-letter code: Small ribosomal subunit protein uS4m (374 aa).

The 65-residue stretch at 259–323 (GRLENFLMRL…KKLYFFIKSK (65 aa)) folds into the S4 RNA-binding domain.

It belongs to the universal ribosomal protein uS4 family.

It is found in the mitochondrion. In Acanthamoeba castellanii (Amoeba), this protein is Small ribosomal subunit protein uS4m (RPS4).